A 626-amino-acid polypeptide reads, in one-letter code: Glutamine--fructose-6-phosphate aminotransferase [isomerizing] (626 aa).

C2 acts as the Nucleophile; for GATase activity in catalysis. In terms of domain architecture, Glutamine amidotransferase type-2 spans 2-222 (CGIVGYIGPQ…NGELARLTPT (221 aa)). SIS domains follow at residues 293 to 441 (LPPS…QRQS) and 471 to 616 (YIEA…VDQP). Residue K621 is the For Fru-6P isomerization activity of the active site.

In terms of assembly, homodimer.

Its subcellular location is the cytoplasm. It carries out the reaction D-fructose 6-phosphate + L-glutamine = D-glucosamine 6-phosphate + L-glutamate. In terms of biological role, catalyzes the first step in hexosamine metabolism, converting fructose-6P into glucosamine-6P using glutamine as a nitrogen source. This is Glutamine--fructose-6-phosphate aminotransferase [isomerizing] from Thermosynechococcus vestitus (strain NIES-2133 / IAM M-273 / BP-1).